The primary structure comprises 358 residues: Uroporphyrinogen decarboxylase (358 aa).

Residues 29-33 (RQAGR), Phe48, Asp79, Tyr155, Ser210, and His330 each bind substrate.

This sequence belongs to the uroporphyrinogen decarboxylase family. As to quaternary structure, homodimer.

The protein resides in the cytoplasm. The catalysed reaction is uroporphyrinogen III + 4 H(+) = coproporphyrinogen III + 4 CO2. It participates in porphyrin-containing compound metabolism; protoporphyrin-IX biosynthesis; coproporphyrinogen-III from 5-aminolevulinate: step 4/4. Functionally, catalyzes the decarboxylation of four acetate groups of uroporphyrinogen-III to yield coproporphyrinogen-III. The sequence is that of Uroporphyrinogen decarboxylase from Bordetella pertussis (strain Tohama I / ATCC BAA-589 / NCTC 13251).